The primary structure comprises 363 residues: Peptide chain release factor 1 (363 aa).

An N5-methylglutamine modification is found at glutamine 237. A compositionally biased stretch (basic and acidic residues) spans 287–299; that stretch reads EQHKEQASTRKEL. Residues 287–306 form a disordered region; sequence EQHKEQASTRKELIGSGDRS.

Belongs to the prokaryotic/mitochondrial release factor family. Post-translationally, methylated by PrmC. Methylation increases the termination efficiency of RF1.

It localises to the cytoplasm. Peptide chain release factor 1 directs the termination of translation in response to the peptide chain termination codons UAG and UAA. In Ruthia magnifica subsp. Calyptogena magnifica, this protein is Peptide chain release factor 1.